Reading from the N-terminus, the 365-residue chain is Outer capsid protein sigma-3 (365 aa).

The CCHC-type zinc finger occupies cysteine 51–cysteine 73.

The protein belongs to the orthoreovirus sigma-3 protein family. In terms of assembly, heterohexamer of three sigma-3 and three Mu-1 proteins. The RNA-binding form is probably a homodimer. Post-translationally, cleaved during virus the endosomal proteolytic disassembly of the outer capsid.

The protein localises to the virion. Its subcellular location is the host cytoplasm. The protein resides in the host nucleus. Stimulates translation by blocking the activation of the dsRNA-dependent protein kinase EIF2AK2/PKR, thereby inhibiting the host interferon response. Sigma3 prevents the activation of EIF2AK2 by competing with the kinase for dsRNA-binding. In terms of biological role, the viral outer shell polypeptides, of which sigma-3 is one, impose structural constraints that prevent elongation of nascent transcripts by the RNA-dependent RNA polymerase lambda-3. This is Outer capsid protein sigma-3 (S4) from Mammalia (T2J).